We begin with the raw amino-acid sequence, 531 residues long: Tryptophan biosynthesis protein TRP1 (531 aa).

Residues 1–254 form an indole-3-glycerol phosphate synthase region; it reads MGNILEEIAA…TVKDLLQNVT (254 aa). An N-(5'-phosphoribosyl)anthranilate isomerase region spans residues 255-531; that stretch reads RHSESGEFAL…TLKIDEETEN (277 aa).

In the N-terminal section; belongs to the TrpC family. It in the C-terminal section; belongs to the TrpF family.

The catalysed reaction is N-(5-phospho-beta-D-ribosyl)anthranilate = 1-(2-carboxyphenylamino)-1-deoxy-D-ribulose 5-phosphate. It catalyses the reaction 1-(2-carboxyphenylamino)-1-deoxy-D-ribulose 5-phosphate + H(+) = (1S,2R)-1-C-(indol-3-yl)glycerol 3-phosphate + CO2 + H2O. Its pathway is amino-acid biosynthesis; L-tryptophan biosynthesis; L-tryptophan from chorismate: step 3/5. It functions in the pathway amino-acid biosynthesis; L-tryptophan biosynthesis; L-tryptophan from chorismate: step 4/5. Its function is as follows. Bifunctional enzyme that catalyzes two sequential steps of tryptophan biosynthetic pathway. The sequence is that of Tryptophan biosynthesis protein TRP1 (TRP1) from Phytophthora nicotianae (Potato buckeye rot agent).